The chain runs to 7059 residues: Replicase polyprotein 1ab (7059 aa).

Residues 54–196 enclose the CoV Nsp1 globular domain; it reads PENHVMVDCR…PWVMYLRKCG (143 aa). Residues 216-246 form the BetaCoV Nsp1 C-terminal domain; sequence FKVEDAYDLVHDEPKGKFSKKAYALIRGYRG. The region spanning 250-519 is the CoV Nsp2 N-terminal domain; it reads LLYVDQYGCD…LICKALYLDY (270 aa). 4 residues coordinate Zn(2+): cysteine 392, cysteine 397, cysteine 413, and cysteine 416. The segment at 392 to 416 is C4; it reads CEQDLCDFKGWVPGNMIDGFACTTC. The CoV Nsp2 middle domain occupies 524 to 713; the sequence is CGNLHQRELL…AQAFRSGAKV (190 aa). Residues 733–851 enclose the CoV Nsp2 C-terminal domain; the sequence is RRRICLSGSK…LDQAWRVPCA (119 aa). The Ubiquitin-like 1 domain occupies 853-966; the sequence is RCVTFKEQPT…LYCAFTAPED (114 aa). The segment covering 972–986 has biased composition (acidic residues); the sequence is ESGVEEDDVEGEETD. The interval 972–1000 is disordered; it reads ESGVEEDDVEGEETDLTVTSAGEPCVASE. A Peptidase C16 1 domain is found at 1036-1274; the sequence is DLESVIQDYE…IAQLYGSCIT (239 aa). Cysteine 1074 functions as the For PL1-PRO activity in the catalytic mechanism. Residues cysteine 1151, cysteine 1154, cysteine 1177, and cysteine 1179 each coordinate Zn(2+). The C4-type 1 zinc-finger motif lies at 1151–1179; that stretch reads CIKCDLALKLKGLDAMFFYGDVVSHVCKC. Active-site for PL1-PRO activity residues include histidine 1225 and aspartate 1236. The 161-residue stretch at 1275–1435 folds into the Macro domain; it reads PNVCFVKGDI…LISKCQITAV (161 aa). One can recognise a DPUP domain in the interval 1491–1563; it reads DDARTFVQSN…VAQIKALFLD (73 aa). In terms of domain architecture, Ubiquitin-like 2 spans 1562–1617; that stretch reads LDKVDILLTVDGVNFTNRFVPVGESFGKSLGNVFCDGVNVTKHKCDINYKGKVFFQ. The Peptidase C16 2 domain occupies 1631–1892; sequence SSFNFDQKEL…KIEYKPDLSQ (262 aa). The active-site For PL2-PRO activity is cysteine 1671. Residues cysteine 1749, cysteine 1751, cysteine 1783, and cysteine 1785 each coordinate Zn(2+). The segment at 1749 to 1785 adopts a C4-type 2 zinc-finger fold; sequence CKCGVKQEQRTGVDAVMHFGTLSREDLEIGYTVDCSC. Residues histidine 1828 and aspartate 1842 each act as for PL2-PRO activity in the active site. Positions 1906–2007 constitute a Nucleic acid-binding domain; the sequence is IKAQFKTFEK…TYFNRPLLVD (102 aa). The G2M domain maps to 2020–2169; sequence DDGGDISESD…ADNKVIYTTE (150 aa). Helical transmembrane passes span 2138–2158, 2199–2219, and 2221–2241; these read ISAC…WIKI, ACII…NVIF, and DFYL…VQWI. The segment at 2138–2385 is HD1; the sequence is ISACFNFIKW…ASFIKLFSLF (248 aa). The 62-residue stretch at 2235–2296 folds into the 3Ecto domain; it reads GKIVQWIKNT…AIDVVQYEAD (62 aa). 2 disulfides stabilise this stretch: cysteine 2251–cysteine 2275 and cysteine 2266–cysteine 2272. 3 helical membrane-spanning segments follow: residues 2313–2333, 2343–2363, and 2365–2385; these read LIVS…LISI, LLML…ANML, and AHVF…FSLF. The segment at 2383-2473 is Y1; it reads SLFRHVAYGC…ELKRPIQPTD (91 aa). The region spanning 2383–2750 is the CoV Nsp3 Y domain; the sequence is SLFRHVAYGC…LTTPFSLKGG (368 aa). Residues histidine 2387, cysteine 2392, cysteine 2397, cysteine 2400, cysteine 2433, histidine 2436, cysteine 2440, and cysteine 2443 each coordinate Zn(2+). A ZF1 region spans residues 2387–2400; it reads HVAYGCSKSGCLFC. The interval 2433–2443 is ZF2; sequence CSKHQWNCIDC. Positions 2474-2566 are Y2; it reads VAYHTVTDVK…MVDKILITTA (93 aa). A coV-Y region spans residues 2474–2750; the sequence is VAYHTVTDVK…LTTPFSLKGG (277 aa). Positions 2567–2649 are Y3; that stretch reads NTGTSVTETM…DSVMSAVSAG (83 aa). Positions 2650-2750 are Y4; sequence LELTDESCNN…LTTPFSLKGG (101 aa). 7 consecutive transmembrane segments (helical) span residues 2752–2772, 2824–2844, 3009–3029, 3031–3051, 3063–3083, 3090–3110, and 3115–3135; these read VFSY…IGLW, STFG…VAVV, VFDL…FLAL, ASSI…YYLI, IVFV…VFQV, VYAI…SVIM, and LVMY…SVVV. The interval 2752 to 3135 is HD2; it reads VFSYFVYVCF…FCLLYISVVV (384 aa). A Nsp4C domain is found at 3149 to 3246; it reads LGTSVRSDGT…TASVSTSFLQ (98 aa). The Peptidase C30 domain occupies 3247-3549; sequence SGIVKMVNPT…YQQLAGIKLQ (303 aa). Residues histidine 3287 and cysteine 3391 each act as for 3CL-PRO activity in the active site. Positions 3319–3775 are HD3; the sequence is LSLTVMSYQM…IISCYWGLFS (457 aa). The next 7 membrane-spanning stretches (helical) occupy residues 3558–3578, 3588–3608, 3615–3635, 3657–3677, 3684–3704, 3711–3731, and 3755–3775; these read GIVC…TAFV, TNML…MLLV, LTMY…LVVY, TYTD…FVTL, LFSF…WYMG, ILLM…LSMA, and IVLV…GLFS. The RdRp Nsp7 cofactor domain maps to 3837–3925; it reads SKLTDVKCAN…DYAKDNTVLQ (89 aa). The region spanning 3926-4122 is the RdRp Nsp8 cofactor domain; that stretch reads ALQSEFVNMA…HNEVSATVLQ (197 aa). The region spanning 4123 to 4232 is the Nsp9 ssRNA-binding domain; the sequence is NNELMPAKLK…GTISSTVRLQ (110 aa). The ExoN/MTase coactivator domain occupies 4233-4370; it reads AGTATEYASN…CVSTDTTVQS (138 aa). Zn(2+) is bound by residues cysteine 4306, cysteine 4309, histidine 4315, cysteine 4322, cysteine 4348, cysteine 4351, cysteine 4359, and cysteine 4361. Zinc fingers lie at residues 4306–4322 and 4348–4361; these read CIYC…DGLC and CQVC…SCSC. The NiRAN domain maps to 4375 to 4630; sequence FLNRVRGTSV…DCELYVNNAY (256 aa). Positions 4578 and 4587 each coordinate Mn(2+). Positions 4631–4729 constitute a Nsp12 Interface domain; the sequence is RLFDLVQYDF…MNMDVDTHRY (99 aa). Residues histidine 4660, cysteine 4666, cysteine 4671, cysteine 4675, and cysteine 4852 each coordinate Zn(2+). The Nsp12 RNA-dependent RNA polymerase domain occupies 4730 to 5297; it reads RLSLKDLLLY…NMYLRSAVMQ (568 aa). The segment at 4732–4946 is rdRp Fingers N-ter; that stretch reads SLKDLLLYAA…HQKCLKSIAA (215 aa). A rdRp Palm N-ter region spans residues 4947–4985; that stretch reads TRGVPVVIGTTKFYGGWDDMLRRLIKDVDNPVLMGWDYP. In terms of domain architecture, RdRp catalytic spans 4977-5139; that stretch reads PVLMGWDYPK…CYNSDYASKG (163 aa). The rdRp Fingers C-ter stretch occupies residues 4986-5044; that stretch reads KCDRAMPNILRIVSSLVLARKHEACCSQSDRFYRLANECAQVLSEIVMCGGCYYVKPGG. Positions 5007, 5010, and 5011 each coordinate Zn(2+). Residues 5045 to 5180 form a rdRp Palm C-ter region; it reads TSSGDATTAF…NNGPHEFCSQ (136 aa). Active-site residues include serine 5124, aspartate 5125, and aspartate 5126. Residues 5181-5297 are rdRp Thumb; sequence HTMLVKMDGD…NMYLRSAVMQ (117 aa). Residues 5298-5410 enclose the CV ZBD domain; it reads SVGACVVCSS…DDFNRIASCK (113 aa). 12 residues coordinate Zn(2+): cysteine 5302, cysteine 5305, cysteine 5313, cysteine 5316, cysteine 5323, cysteine 5326, histidine 5330, histidine 5336, cysteine 5347, cysteine 5352, cysteine 5369, and histidine 5372. Residues 5553 to 5734 enclose the (+)RNA virus helicase ATP-binding domain; that stretch reads SVLETFQNNV…MCCLGPDIFL (182 aa). Residue 5578-5585 coordinates ATP; it reads GPPGTGKS. In terms of domain architecture, (+)RNA virus helicase C-terminal spans 5735–5904; that stretch reads GTCYRCPKEI…VETRVQCSTN (170 aa). The region spanning 5971–6186 is the ExoN domain; sequence LFITKEEAVK…RCLAVYDCFC (216 aa). Residues aspartate 5989, glutamate 5991, and glutamate 6090 contribute to the active site. Residues histidine 6156, cysteine 6160, and histidine 6163 each contribute to the Zn(2+) site. Active-site residues include histidine 6167 and aspartate 6172. Cysteine 6178 is a Zn(2+) binding site. The 227-residue stretch at 6195-6421 folds into the N7-MTase domain; the sequence is YPIISNELSI…NLWNTFTKLQ (227 aa). 6230–6236 contributes to the S-adenosyl-L-methionine binding site; sequence DIGNPKA. The interval 6308–6322 is gpppA-binding; sequence CNGGSLYVNKHAFHT. The Zn(2+) site is built by cysteine 6346, cysteine 6367, cysteine 6378, and histidine 6381. Residues 6422–6482 form the Nsp15 N-terminal oligomerization domain; that stretch reads SLENVVYNLV…NVAVELFAKR (61 aa). An AV-Nsp11N/CoV-Nsp15M domain is found at 6483 to 6603; sequence SIRHHPELKL…FAVRKEGQDV (121 aa). In terms of domain architecture, NendoU spans 6653-6792; sequence TCRTDMEKDF…NDEKVMTFYP (140 aa). Active-site residues include histidine 6683, histidine 6698, lysine 6738, lysine 6841, aspartate 6935, lysine 6971, and glutamate 7004. One can recognise a Nidovirus-type SAM-dependent 2'-O-MTase domain in the interval 6797–7059; it reads ASDWKPGYSM…NSRLSWLVMP (263 aa).

The protein belongs to the coronaviruses polyprotein 1ab family. In terms of assembly, interacts with host PHB and PHB2. As to quaternary structure, interacts with papain-like protease nsp3 and non-structural protein 6. Monomer. Homodimer. Only the homodimer shows catalytic activity. In terms of assembly, interacts with nsp8 and nsp12 to form the replication-transcription complex (RTC): nsp12, nsp7, two subunits of nsp8, and up to two subunits of nsp13. As to quaternary structure, interacts with nsp7, nsp13 and nsp12 to form the replication-transcription complex (RTC): nsp12, nsp7, two subunits of nsp8, and up to two subunits of nsp13. Interacts with nsp12. In terms of assembly, interacts with proofreading exoribonuclease nsp14 and 2'-O-methyltransferase nsp16; these interactions enhance nsp14 and nsp16 enzymatic activities. As to quaternary structure, interacts with nsp7 and nsp8 to form the replication-transcription complex (RTC): nsp12, nsp7, two subunits of nsp8, and up to two subunits of nsp13. Interacts with nsp9. Interacts with nsp8 to form the replication-transcription complex (RTC): nsp12, nsp7, two subunits of nsp8, and up to two subunits of nsp13. Requires Mn(2+) as cofactor. The cofactor is Mg(2+). Specific enzymatic cleavages in vivo by its own proteases yield mature proteins. 3CL-PRO and PL-PRO proteinases are autocatalytically processed.

The protein localises to the host membrane. The protein resides in the host cytoplasm. It is found in the host perinuclear region. Its subcellular location is the host endoplasmic reticulum-Golgi intermediate compartment. The catalysed reaction is RNA(n) + a ribonucleoside 5'-triphosphate = RNA(n+1) + diphosphate. The enzyme catalyses ATP + H2O = ADP + phosphate + H(+). It carries out the reaction Thiol-dependent hydrolysis of ester, thioester, amide, peptide and isopeptide bonds formed by the C-terminal Gly of ubiquitin (a 76-residue protein attached to proteins as an intracellular targeting signal).. It catalyses the reaction a 5'-end (N(7)-methyl 5'-triphosphoguanosine)-ribonucleoside in mRNA + S-adenosyl-L-methionine = a 5'-end (N(7)-methyl 5'-triphosphoguanosine)-(2'-O-methyl-ribonucleoside) in mRNA + S-adenosyl-L-homocysteine + H(+). The catalysed reaction is uridylyl-uridylyl-ribonucleotide-RNA = a 3'-end uridylyl-2',3'-cyclophospho-uridine-RNA + a 5'-end dephospho-ribonucleoside-RNA. The enzyme catalyses a 5'-end diphospho-ribonucleoside in mRNA + GTP + H(+) = a 5'-end (5'-triphosphoguanosine)-ribonucleoside in mRNA + diphosphate. It carries out the reaction a 5'-end (5'-triphosphoguanosine)-ribonucleoside in mRNA + S-adenosyl-L-methionine = a 5'-end (N(7)-methyl 5'-triphosphoguanosine)-ribonucleoside in mRNA + S-adenosyl-L-homocysteine. In terms of biological role, the replicase polyprotein of coronaviruses is a multifunctional protein: it contains the activities necessary for the transcription of negative stranded RNA, leader RNA, subgenomic mRNAs and progeny virion RNA as well as proteinases responsible for the cleavage of the polyprotein into functional products. Inhibits host translation by interacting with the 40S ribosomal subunit. The nsp1-40S ribosome complex further induces an endonucleolytic cleavage near the 5'UTR of host mRNAs, targeting them for degradation. Viral mRNAs are not susceptible to nsp1-mediated endonucleolytic RNA cleavage thanks to the presence of a 5'-end leader sequence and are therefore protected from degradation. By suppressing host gene expression, nsp1 facilitates efficient viral gene expression in infected cells and evasion from host immune response. Its function is as follows. May play a role in the modulation of host cell survival signaling pathway by interacting with host PHB and PHB2. Indeed, these two proteins play a role in maintaining the functional integrity of the mitochondria and protecting cells from various stresses. Functionally, responsible for the cleavages located at the N-terminus of the replicase polyprotein. In addition, PL-PRO possesses a deubiquitinating/deISGylating activity and processes both 'Lys-48'- and 'Lys-63'-linked polyubiquitin chains from cellular substrates. Participates together with nsp4 in the assembly of virally-induced cytoplasmic double-membrane vesicles necessary for viral replication. Antagonizes innate immune induction of type I interferon by blocking the phosphorylation, dimerization and subsequent nuclear translocation of host IRF3. Also prevents host NF-kappa-B signaling. In terms of biological role, participates in the assembly of virally-induced cytoplasmic double-membrane vesicles necessary for viral replication. Cleaves the C-terminus of replicase polyprotein at 11 sites. Recognizes substrates containing the core sequence [ILMVF]-Q-|-[SGACN]. Also able to bind an ADP-ribose-1''-phosphate (ADRP). Its function is as follows. Plays a role in the initial induction of autophagosomes from host endoplasmic reticulum. Later, limits the expansion of these phagosomes that are no longer able to deliver viral components to lysosomes. Functionally, forms a hexadecamer with nsp8 (8 subunits of each) that may participate in viral replication by acting as a primase. Alternatively, may synthesize substantially longer products than oligonucleotide primers. In terms of biological role, forms a hexadecamer with nsp7 (8 subunits of each) that may participate in viral replication by acting as a primase. Alternatively, may synthesize substantially longer products than oligonucleotide primers. Forms a primer, NSP9-pU, which is utilized by the polymerase for the initiation of RNA chains. Interacts with ribosome signal recognition particle RNA (SRP). Together with NSP8, suppress protein integration into the cell membrane, thereby disrupting host immune defenses. Its function is as follows. Plays a pivotal role in viral transcription by stimulating both nsp14 3'-5' exoribonuclease and nsp16 2'-O-methyltransferase activities. Therefore plays an essential role in viral mRNAs cap methylation. Functionally, RNA-directed RNA polymerase that catalyzes the transcription of viral genomic and subgenomic RNAs. Acts in complex with nsp7 and nsp8 to transcribe both the minus and positive strands of genomic RNA. The kinase-like NiRAN domain of NSP12 attaches one or more nucleotides to the amino terminus of NSP9, forming a covalent RNA-protein intermediate that serves as transcription/replication primer. Subgenomic RNAs (sgRNAs) are formed by discontinuous transcription: The polymerase has the ability to pause at transcription-regulating sequences (TRS) and jump to the leader TRS, resulting in a major deletion. This creates a series of subgenomic RNAs that are replicated, transcribed and translated. In addition, Nsp12 is a subunit of the viral RNA capping enzyme that catalyzes the RNA guanylyltransferase reaction for genomic and sub-genomic RNAs. Subsequently, the NiRAN domain transfers RNA to GDP, and forms the core cap structure GpppA-RNA. In terms of biological role, multi-functional protein with a zinc-binding domain in N-terminus displaying RNA and DNA duplex-unwinding activities with 5' to 3' polarity. Activity of helicase is dependent on magnesium. Plays a role in viral RNA synthesis through two distinct activities. The N7-guanine methyltransferase activity plays a role in the formation of the cap structure GpppA-RNA. The proofreading exoribonuclease reduces the sensitivity of the virus to RNA mutagens during replication. This activity acts on both ssRNA and dsRNA in a 3'-5' direction. Its function is as follows. Plays a role in viral transcription/replication and prevents the simultaneous activation of host cell dsRNA sensors, such as MDA5/IFIH1, OAS, and PKR. Acts by degrading the 5'-polyuridines generated during replication of the poly(A) region of viral genomic and subgenomic RNAs. Catalyzes a two-step reaction in which a 2'3'-cyclic phosphate (2'3'-cP) is first generated by 2'-O transesterification, which is then hydrolyzed to a 3'-phosphate (3'-P). If not degraded, poly(U) RNA would hybridize with poly(A) RNA tails and activate host dsRNA sensors. Functionally, methyltransferase that mediates mRNA cap 2'-O-ribose methylation to the 5'-cap structure of viral mRNAs. N7-methyl guanosine cap is a prerequisite for binding of nsp16. Therefore plays an essential role in viral mRNAs cap methylation which is essential to evade immune system. The chain is Replicase polyprotein 1ab (rep) from Bos taurus (Bovine).